The chain runs to 203 residues: Small ribosomal subunit protein uS4 (203 aa).

The S4 RNA-binding domain maps to 93–156 (RRLDNVVYRL…LKVPAILEAV (64 aa)).

It belongs to the universal ribosomal protein uS4 family. As to quaternary structure, part of the 30S ribosomal subunit. Contacts protein S5. The interaction surface between S4 and S5 is involved in control of translational fidelity.

Functionally, one of the primary rRNA binding proteins, it binds directly to 16S rRNA where it nucleates assembly of the body of the 30S subunit. With S5 and S12 plays an important role in translational accuracy. This chain is Small ribosomal subunit protein uS4, found in Streptococcus sanguinis (strain SK36).